The following is a 1670-amino-acid chain: Collagen alpha-3(IV) chain (1670 aa).

Residues 1–28 (MSARTAPRPQVLLLPLLLVLLAAAPAAS) form the signal peptide. The 7S domain stretch occupies residues 29–42 (KGCVCKDKGQCFCD). Positions 43–1438 (GAKGEKGEKG…KGKRGDSGSP (1396 aa)) are triple-helical region. Disordered regions lie at residues 49-78 (GEKGFPGPPGSPGQKGFTGPEGLPGPQGPK), 167-469 (LDAK…DGPK), and 502-1442 (GRQG…ATWT). Over residues 176 to 200 (PGAPGPQGLPGPPGFPGPVGPPGPP) the composition is skewed to pro residues. Residues 202 to 212 (FFGFPGAMGPR) show a composition bias toward low complexity. Over residues 217–231 (HMGERVIGHKGERGV) the composition is skewed to basic and acidic residues. Over residues 242-251 (GTVIVTLTGP) the composition is skewed to low complexity. Asn-253 carries N-linked (GlcNAc...) asparagine glycosylation. A compositionally biased stretch (basic and acidic residues) spans 253–266 (NRTDLKGEKGDKGA). Over residues 382-394 (SPGSSRPGLRGAP) the composition is skewed to low complexity. Residues 402-411 (SKGERGRPGK) are compositionally biased toward basic and acidic residues. The span at 415-428 (GTPGSPGCAGSPGL) shows a compositional bias: low complexity. 3 stretches are compositionally biased toward pro residues: residues 429–438 (PGSPGPPGPP), 598–618 (PGDPGSPGSPGPAGPAGPPGY), and 654–675 (VPGPPGPPGPPGHPGPQGPPGI). The Cell attachment site signature appears at 791-793 (RGD). Pro residues predominate over residues 900–909 (IGPPGPPGNP). Low complexity predominate over residues 974-987 (VPGMPGLKGLKGLP). Residues 996-998 (RGD) carry the Cell attachment site motif. 3 stretches are compositionally biased toward low complexity: residues 1013-1025 (IPGSMGNMGMPGS), 1094-1105 (LGPAGPEGAPGS), and 1118-1133 (HGDLGFKGIKGLLGPP). A compositionally biased stretch (pro residues) spans 1135-1148 (IRGPPGLPGFPGSP). The Cell attachment site signature appears at 1154–1156 (RGD). Composition is skewed to low complexity over residues 1230-1250 (PGAIIPGQTGNRGPPGSRGSP) and 1290-1299 (PPGRLGAPGT). The Cell attachment site motif lies at 1306–1308 (RGD). Residues 1332–1341 (PPGPIGPKGP) show a composition bias toward pro residues. 2 short sequence motifs (cell attachment site) span residues 1345-1347 (RGD) and 1432-1434 (RGD). The interval 1427-1444 (GLKGKRGDSGSPATWTTR) is epitope recognized by Goodpasture antibodies. In terms of domain architecture, Collagen IV NC1 spans 1445-1669 (GFVFTRHSQT…SRCQVCMKKR (225 aa)). 6 disulfide bridges follow: Cys-1460–Cys-1551, Cys-1493–Cys-1548, Cys-1505–Cys-1511, Cys-1570–Cys-1665, Cys-1604–Cys-1662, and Cys-1616–Cys-1622. Residues 1479-1557 (NQRAHGQDLG…CTVCEGPAIA (79 aa)) are required for the anti-angiogenic activity of tumstatin. Met-1533 is covalently cross-linked (S-Lysyl-methionine sulfilimine (Met-Lys) (interchain with K-1651)). The required for the anti-tumor cell activity of tumstatin stretch occupies residues 1610 to 1628 (ASPFLECHGRGTCNYYSNS). Lys-1651 is covalently cross-linked (S-Lysyl-methionine sulfilimine (Lys-Met) (interchain with M-1533)).

This sequence belongs to the type IV collagen family. There are six type IV collagen isoforms, alpha 1(IV)-alpha 6(IV), each of which can form a triple helix structure with 2 other chains to generate type IV collagen network. The alpha 3(IV) chain forms a triple helical protomer with alpha 4(IV) and alpha 5(IV); this triple helical structure dimerizes through NC1-NC1 domain interactions such that the alpha 3(IV), alpha 4(IV) and alpha 5(IV) chains of one protomer connect with the alpha 5(IV), alpha 4(IV) and alpha 3(IV) chains of the opposite promoter, respectively. Interacts with ITGB3. Associates with LAMB2 at the neuromuscular junction and in GBM. Prolines at the third position of the tripeptide repeating unit (G-X-Y) are hydroxylated in some or all of the chains. Post-translationally, isoform 2 contains an additional N-linked glycosylation site. In terms of processing, type IV collagens contain numerous cysteine residues which are involved in inter- and intramolecular disulfide bonding. 12 of these, located in the NC1 domain, are conserved in all known type IV collagens. The trimeric structure of the NC1 domains is stabilized by covalent bonds between Lys and Met residues. Post-translationally, phosphorylated. Thought to be phosphorylated by CERT, but CERT does not have kinase activity. As to expression, alpha 3 and alpha 4 type IV collagens are colocalized and present in kidney, eye, basement membranes of lens capsule, cochlea, lung, skeletal muscle, aorta, synaptic fibers, fetal kidney and fetal lung. PubMed:8083201 reports similar levels of expression of alpha 3 and alpha 4 type IV collagens in kidney, but PubMed:7523402 reports that in kidney levels of alpha 3 type IV collagen are significantly lower than those of alpha 4 type IV collagen. According to PubMed:8083201, alpha 3 type IV collagen is not detected in heart, brain, placenta, liver, pancreas, extrasynaptic muscle fibers, endoneurial and perineurial nerves, fetal brain, fetal heart and fetal liver. According to PubMed:7523402, alpha 3 type IV collagen is strongly expressed in pancreas, neuroretina and calvaria and not expressed in adrenal, ileum and skin. Isoform 1 and isoform 3 are strongly expressed in kidney, lung, suprarenal capsule, muscle and spleen, in each of these tissues isoform 1 is more abundant than isoform 3. Isoform 1 and isoform 3 are expressed at low levels in artery, fat, pericardium and peripherical nerve, but not in placenta, mesangium, skin, pleura and cultured umbilical endothelial cells.

Its subcellular location is the secreted. The protein localises to the extracellular space. It localises to the extracellular matrix. It is found in the basement membrane. In terms of biological role, type IV collagen is the major structural component of glomerular basement membranes (GBM), forming a 'chicken-wire' meshwork together with laminins, proteoglycans and entactin/nidogen. Its function is as follows. Tumstatin, a cleavage fragment corresponding to the collagen alpha 3(IV) NC1 domain, possesses both anti-angiogenic and anti-tumor cell activity; these two anti-tumor properties may be regulated via RGD-independent ITGB3-mediated mechanisms. This chain is Collagen alpha-3(IV) chain (COL4A3), found in Homo sapiens (Human).